The primary structure comprises 1781 residues: Signal-induced proliferation-associated 1-like protein 3 (1781 aa).

2 disordered regions span residues 45 to 166 and 239 to 332; these read SMSQ…FLPL and TELL…EASR. Residues 54-73 show a composition bias toward low complexity; that stretch reads PATATATATATTRPSPTTPA. The span at 87–97 shows a compositional bias: basic and acidic residues; it reads PPKREALREHS. Serine 100 is subject to Phosphoserine. Residues 118–135 are compositionally biased toward polar residues; that stretch reads RSIQNGQPPTSTPASSGS. Over residues 137–146 the composition is skewed to basic residues; that stretch reads AFHRLSRRRS. Serine 146 bears the Phosphoserine mark. Position 401 is a phosphoserine (serine 401). The Rap-GAP domain occupies 611-828; that stretch reads LLKLDEQGLC…RTRQEYLKDL (218 aa). The 77-residue stretch at 966 to 1042 folds into the PDZ domain; the sequence is DMTLRRNGLG…VKVVIIPPFE (77 aa). 4 disordered regions span residues 1046 to 1112, 1124 to 1221, 1236 to 1565, and 1583 to 1636; these read PRRG…SLSR, ESQP…QKPE, AGSS…GLEP, and TLPA…RLDP. 2 stretches are compositionally biased toward polar residues: residues 1080 to 1111 and 1157 to 1166; these read APWQ…QSLS and PSGSFSTPGS. The segment covering 1196–1210 has biased composition (low complexity); the sequence is DGTSSGDSSSGGLTS. Residues 1245–1261 show a composition bias toward basic and acidic residues; it reads SRQDAAGKDSPNRHSKG. The segment covering 1266–1281 has biased composition (low complexity); the sequence is SSHSSSNTLSSNASSS. Residues 1304 to 1322 are compositionally biased toward polar residues; it reads GGSSDSGIDTTLYTSSPSC. At serine 1364 the chain carries Phosphoserine. Threonine 1387 is modified (phosphothreonine). Over residues 1425 to 1441 the composition is skewed to polar residues; it reads RPSQLAQPSPFQLSASV. At lysine 1448 the chain carries N6-acetyllysine. A compositionally biased stretch (basic and acidic residues) spans 1509-1518; that stretch reads TIEDDLKKLI. Over residues 1532–1547 the composition is skewed to polar residues; that stretch reads GQSPQKGLQRTLSDES. A phosphoserine mark is found at serine 1544 and serine 1547. Residues 1599–1609 are compositionally biased toward low complexity; it reads PGATPAAGSGF. Serine 1619 and serine 1622 each carry phosphoserine. Positions 1625 to 1635 are enriched in basic and acidic residues; sequence DGRDRPLRRLD. Serine 1677 bears the Phosphoserine mark. A disordered region spans residues 1685–1712; the sequence is SPVHSHLSLERGPPTPRTTPTMSEEPPL. Threonine 1699 and threonine 1703 each carry phosphothreonine. Positions 1720–1774 form a coiled coil; it reads QLEVMLKQLHTDLQKEKQDKVVLQSEVASLRQNNQRLQEESQAASEQLRKFAEIF.

The protein localises to the apical cell membrane. Plays a critical role in epithelial cell morphogenesis, polarity, adhesion and cytoskeletal organization in the lens. This chain is Signal-induced proliferation-associated 1-like protein 3 (SIPA1L3), found in Homo sapiens (Human).